Consider the following 229-residue polypeptide: PHO85 cyclin-5 (229 aa).

The span at 1 to 24 (MDGNHRFTPDSKEFNTVVKSKESS) shows a compositional bias: basic and acidic residues. Positions 1–46 (MDGNHRFTPDSKEFNTVVKSKESSTGRNPYQTPPLEHNGTHHQTNY) are disordered.

The protein belongs to the cyclin family. PCL1,2 subfamily. In terms of assembly, forms a cyclin-CDK complex with PHO85.

In terms of biological role, cyclin partner of the cyclin-dependent kinase (CDK) PHO85. Positively controls degradation of transcription factor GCN4 under favorable growth conditions. The PCL5-PHO85 cyclin-CDK holoenzyme phosphorylates GCN4, which is required for its degradation by the E3 ubiquitin ligase complex SCF(Cdc4). Amino acid starvation reduces PCL5-PHO85-associated GCN4 kinase activity and leads to stabilization of GCN4. The protein is PHO85 cyclin-5 (PCL5) of Saccharomyces cerevisiae (strain ATCC 204508 / S288c) (Baker's yeast).